We begin with the raw amino-acid sequence, 78 residues long: Small ribosomal subunit protein bS18 (78 aa).

Belongs to the bacterial ribosomal protein bS18 family. Part of the 30S ribosomal subunit. Forms a tight heterodimer with protein bS6.

Binds as a heterodimer with protein bS6 to the central domain of the 16S rRNA, where it helps stabilize the platform of the 30S subunit. This is Small ribosomal subunit protein bS18 from Limosilactobacillus fermentum (strain NBRC 3956 / LMG 18251) (Lactobacillus fermentum).